Consider the following 37-residue polypeptide: Defensin-A (37 aa).

Cystine bridges form between cysteine 4/cysteine 25, cysteine 10/cysteine 33, and cysteine 14/cysteine 35.

The protein resides in the secreted. Functionally, has antibacterial activity against M.luteus and E.coli. In Mytilus edulis (Blue mussel), this protein is Defensin-A.